A 148-amino-acid chain; its full sequence is Lysozyme C (148 aa).

The signal sequence occupies residues 1-18; sequence MKVLIILGLVLLSVMVQG. The C-type lysozyme domain maps to 19-148; the sequence is KVFERCELAR…VSQYVQGCGV (130 aa). Disulfide bonds link C24/C146, C48/C134, C83/C99, and C95/C113. Active-site residues include E53 and D71.

Belongs to the glycosyl hydrolase 22 family. As to quaternary structure, monomer.

It catalyses the reaction Hydrolysis of (1-&gt;4)-beta-linkages between N-acetylmuramic acid and N-acetyl-D-glucosamine residues in a peptidoglycan and between N-acetyl-D-glucosamine residues in chitodextrins.. Its function is as follows. Lysozymes have primarily a bacteriolytic function; those in tissues and body fluids are associated with the monocyte-macrophage system and enhance the activity of immunoagents. This Callithrix jacchus (White-tufted-ear marmoset) protein is Lysozyme C (LYZ).